The following is a 704-amino-acid chain: Elongation factor G (704 aa).

Positions 9–285 (AKVRNIGIMA…AIVAYLPSPL (277 aa)) constitute a tr-type G domain. Residues 18 to 25 (AHIDAGKT), 82 to 86 (DTPGH), and 136 to 139 (NKMD) each bind GTP.

It belongs to the TRAFAC class translation factor GTPase superfamily. Classic translation factor GTPase family. EF-G/EF-2 subfamily.

The protein resides in the cytoplasm. In terms of biological role, catalyzes the GTP-dependent ribosomal translocation step during translation elongation. During this step, the ribosome changes from the pre-translocational (PRE) to the post-translocational (POST) state as the newly formed A-site-bound peptidyl-tRNA and P-site-bound deacylated tRNA move to the P and E sites, respectively. Catalyzes the coordinated movement of the two tRNA molecules, the mRNA and conformational changes in the ribosome. In Thermobifida fusca (strain YX), this protein is Elongation factor G.